Consider the following 336-residue polypeptide: PHD finger protein 11 (336 aa).

The tract at residues 1-20 (MAEETAPPCGPVSTGGSLSP) is disordered. The C2HC pre-PHD-type zinc-finger motif lies at 25–61 (KRTCALCPDGHEWSVIYFAPSANIAAHENCLLYSSGL). The segment at 91 to 143 (LKCSLCNKGGATVGCDLSSCRKSYHYVCAKKDHAIPQVDEDLGTYKIFCPEHP) adopts a PHD-type zinc-finger fold. 2 disordered regions span residues 139 to 179 (CPEH…KKMK) and 303 to 336 (DPSG…GDSL). The span at 303 to 314 (DPSGSTSGSLLP) shows a compositional bias: low complexity.

Interacts with BRCA1 and RELA.

It is found in the nucleus. Its function is as follows. Positive regulator of Th1-type cytokine gene expression. This chain is PHD finger protein 11 (Phf11), found in Rattus norvegicus (Rat).